The sequence spans 857 residues: MALPSSSLSSQIHTGATTQCIPHFHGSLNAGTSAGKRRSLYLRWGKDNQAKKLGPSKIVACAGQDPFSVPTLVKREFPPGFWKDHVIESLMPSYKVAPSDEKRIETLITEIKNMFRSMGYGETNPSAYDTAWVARIPAVDGSEKPQFPETLEWILQNQLKDGSWGEEFYFLAYDRILATLACIITLTIWQTGDTQVQKGIEFFKTQAGKIEEEADSHRPSGFEIVFPAMLKEAKALGLALPYELPFIQQIIEKREAKLQRLPSDLLYALPTTLLYSLEGLQEIVDWEKIMKLQSKDGSFLSSPASTAAVFMRTGNKKCLEFLNFVLKKFGNHVPCHYPLDLFERLWAVDTVERLGIDHHFKEEIKDALDYVYSHWDERGIGWARENPVPDIDDTAMGLRILRLHGYNVSSDVLKTFRDENGEFFCFLGQTQRGVTDMLNVNRCSHVAFPGETIIEEAKLCTERYLRNALEDTGAFDKWALKKNIRGEVEYALKYPWHRSMPRLEARSYIENYGPNDVWLGKTMYMMPNISNEKYLELAKLDFNRVQFFHRQELQDIRRWWNSSGFSQLGFTRERVAEIYFSPASFLFEPEFATCRAVYTKTSNFTVILDDLYDAHGTLDNLKLFSESVKRWDLSLVDQMPQDMKICFKGFYNTFNEIAEEGRKRQGRDVLSYIQKVWEVQLEAYTKEAEWSAVRYVPSYDEYIENASVSIALGTVVLISALFTGEILTDDILSKIGRDSRFLYLMGLTGRLVNDTKTYQAERGQGEVASAVQCYMKDHPEISEEEALKHVYTIMDNALDELNREFVNNRDVPDTCRRLVFETARIMQLFYMDGDGLTLSHNMEIKEHVKNCLFQPVA.

The N-terminal 33 residues, 1-33 (MALPSSSLSSQIHTGATTQCIPHFHGSLNAGTS), are a transit peptide targeting the chloroplast. Substrate is bound at residue Lys257. Mg(2+) is bound by residues Asp390 and Asp392. The DXDD motif motif lies at 390–393 (DIDD). Lys477 lines the substrate pocket. Residues Asp609, Asp613, Asn753, Thr757, and Glu761 each contribute to the Mg(2+) site. The DDXXD motif signature appears at 609-613 (DDLYD).

The protein belongs to the terpene synthase family. Tpsd subfamily. Mg(2+) serves as cofactor.

It localises to the plastid. It is found in the chloroplast. The enzyme catalyses (2E,6E,10E)-geranylgeranyl diphosphate = (+)-copalyl diphosphate. It carries out the reaction (+)-copalyl diphosphate = abieta-7,13-diene + diphosphate. It catalyses the reaction (+)-copalyl diphosphate = abieta-8(14),12-diene + diphosphate. The catalysed reaction is (+)-copalyl diphosphate = neoabietadiene + diphosphate. It functions in the pathway terpene metabolism; oleoresin biosynthesis. Its function is as follows. Involved in defensive oleoresin formation in conifers in response to insect attack or other injury. Involved in diterpene (C20) olefins biosynthesis. Bifunctional enzyme that catalyzes two sequential cyclizations of geranylgeranyl diphosphate (GGPP) to levopimaradiene. Levopimaradiene is the major products of the enzyme with abietadiene and neoabietadiene. No activity with farnesyl diphosphate (FPP) as substrate. The chain is Bifunctional levopimaradiene synthase, chloroplastic from Pinus contorta (Shore pine).